The sequence spans 215 residues: MHRDAWLPRPAFSLTGLSLFFSLVPSGRSMEVTVPTTLSVLNGSDTRLPCTFNSCYTVNHKQFSLNWTYQECSNCSEEMFLQFRMKIINLKLERFGDRVEFSGNPSKYDVSVTLKNVQLEDEGIYNCYITNPPDRHRGHGKIYLQVLLEVPPERDSTVAVIVGASVGGFLAVVILVLMVVKCVRRKKEQKLSTDDLKTEEEGKTDGEGNAEDGAK.

The N-terminal stretch at 1–29 (MHRDAWLPRPAFSLTGLSLFFSLVPSGRS) is a signal peptide. Topologically, residues 30–157 (MEVTVPTTLS…LEVPPERDST (128 aa)) are extracellular. In terms of domain architecture, Ig-like C2-type spans 32–154 (VTVPTTLSVL…QVLLEVPPER (123 aa)). N-linked (GlcNAc...) asparagine glycans are attached at residues Asn42, Asn66, and Asn74. Intrachain disulfides connect Cys50–Cys127 and Cys72–Cys75. Residues 158–179 (VAVIVGASVGGFLAVVILVLMV) form a helical membrane-spanning segment. Topologically, residues 180–215 (VKCVRRKKEQKLSTDDLKTEEEGKTDGEGNAEDGAK) are cytoplasmic. A disordered region spans residues 187–215 (KEQKLSTDDLKTEEEGKTDGEGNAEDGAK). Residues 189–215 (QKLSTDDLKTEEEGKTDGEGNAEDGAK) are compositionally biased toward basic and acidic residues. A Phosphoserine modification is found at Ser192. Thr204 is subject to Phosphothreonine.

The protein belongs to the sodium channel auxiliary subunit SCN2B (TC 8.A.17) family. A voltage-gated sodium (Nav) channel consists of an ion-conducting pore-forming alpha subunit functional on its own that is regulated by one or more beta subunits. The beta subunit SCN2B is disulfide-linked to the pore-forming alpha subunit. Interacts with SCN1A; regulatory subunit of SCN1A/Nav1.1. Interacts with SCN2A; regulatory subunit of SCN2A/Nav1.2. Interacts with SCN3A; regulatory subunit of SCN3A/Nav1.3. Interacts with SCN5A; regulatory subunit of SCN5A/Nav1.5. Interacts with SCN8A; regulatory subunit of SCN8A/Nav1.6. Interacts with SCN9A; regulatory subunit of SCN9A/Nav1.7. Interacts with SCN10A; regulatory subunit of SCN10A/Nav1.8. Interacts with TNR; may play a crucial role in clustering and regulation of activity of SCN2B-containing Nav channels at nodes of Ranvier.

The protein resides in the cell membrane. It is found in the cell projection. It localises to the axon. Its function is as follows. Regulatory subunit of multiple voltage-gated sodium (Nav) channels directly mediating the depolarization of excitable membranes. Navs, also called VGSCs (voltage-gated sodium channels) or VDSCs (voltage-dependent sodium channels), operate by switching between closed and open conformations depending on the voltage difference across the membrane. In the open conformation they allow Na(+) ions to selectively pass through the pore, along their electrochemical gradient. The influx of Na+ ions provokes membrane depolarization, initiating the propagation of electrical signals throughout cells and tissues. The accessory beta subunits participate in localization and functional modulation of the Nav channels. Modulates the activity of SCN1A/Nav1.1, SCN2A/Nav1.2, SCN2A/Nav1.3, SCN5A/Nav1.5, SCN8A/Nav1.6, SCN9A/Nav1.7 and SCN10A/Nav1.8. The protein is Sodium channel regulatory subunit beta-2 of Rattus norvegicus (Rat).